We begin with the raw amino-acid sequence, 374 residues long: CMP-N-acetylneuraminate-beta-1,4-galactoside alpha-2,3-sialyltransferase (374 aa).

The Cytoplasmic segment spans residues 1 to 8; sequence MGLLVFVR. The helical; Signal-anchor for type II membrane protein transmembrane segment at 9-28 threads the bilayer; sequence NLLLALCLFLVLGFLYYSAW. The Lumenal portion of the chain corresponds to 29–374; the sequence is KLHLLQWEDS…RVITDLSSGI (346 aa). N-linked (GlcNAc...) asparagine glycans are attached at residues N79 and N170. An intrachain disulfide couples C159 to C313.

The protein belongs to the glycosyltransferase 29 family. In terms of tissue distribution, found in all tissues tested. High expression found in brain, liver, kidney, colon, heart and spleen.

Its subcellular location is the membrane. It is found in the golgi apparatus. It localises to the golgi stack membrane. The catalysed reaction is a beta-D-galactosyl-(1-&gt;4)-N-acetyl-beta-D-glucosaminyl derivative + CMP-N-acetyl-beta-neuraminate = an N-acetyl-alpha-neuraminyl-(2-&gt;3)-beta-D-galactosyl-(1-&gt;4)-N-acetyl-beta-D-glucosaminyl derivative + CMP + H(+). It functions in the pathway protein modification; protein glycosylation. Its function is as follows. Catalyzes the formation of the NeuAc-alpha-2,3-Gal-beta-1,4-GlcNAc-, NeuAc-alpha-2,3-Gal-beta-1,3-GlcNAc- and NeuAc-alpha-2,3-Gal-beta-1,3-GalNAc- sequences found in terminal carbohydrate groups of glycoproteins and glycolipids. The highest activity is toward Gal-beta-1,3-GlcNAc and the lowest toward Gal-beta-1,3-GalNAc. The sequence is that of CMP-N-acetylneuraminate-beta-1,4-galactoside alpha-2,3-sialyltransferase (St3gal3) from Mus musculus (Mouse).